A 44-amino-acid chain; its full sequence is MQDLKTYLSTAPVLAISWLIFVAGLLIEINRFFPDALTLTFPSF.

A helical transmembrane segment spans residues 7-27 (YLSTAPVLAISWLIFVAGLLI).

The protein belongs to the PsaJ family.

It is found in the plastid. The protein localises to the chloroplast thylakoid membrane. May help in the organization of the PsaE and PsaF subunits. This is Photosystem I reaction center subunit IX from Larix decidua (European larch).